Reading from the N-terminus, the 194-residue chain is Phosphoheptose isomerase (194 aa).

The 158-residue stretch at 37–194 folds into the SIS domain; the sequence is ISNSFKQGGK…LIEFEMAKQA (158 aa). Residue 52–54 participates in substrate binding; it reads NGG. Zn(2+)-binding residues include histidine 61 and glutamate 65. Substrate-binding positions include glutamate 65, 93-94, 119-121, serine 124, and glutamine 172; these read ND and STS. Zn(2+) is bound by residues glutamine 172 and histidine 180.

Belongs to the SIS family. GmhA subfamily. As to quaternary structure, homotetramer. Zn(2+) serves as cofactor.

It is found in the cytoplasm. It catalyses the reaction 2 D-sedoheptulose 7-phosphate = D-glycero-alpha-D-manno-heptose 7-phosphate + D-glycero-beta-D-manno-heptose 7-phosphate. Its pathway is carbohydrate biosynthesis; D-glycero-D-manno-heptose 7-phosphate biosynthesis; D-glycero-alpha-D-manno-heptose 7-phosphate and D-glycero-beta-D-manno-heptose 7-phosphate from sedoheptulose 7-phosphate: step 1/1. It participates in bacterial outer membrane biogenesis; LOS core biosynthesis. In terms of biological role, catalyzes the isomerization of sedoheptulose 7-phosphate in D-glycero-D-manno-heptose 7-phosphate. This chain is Phosphoheptose isomerase, found in Haemophilus influenzae (strain ATCC 51907 / DSM 11121 / KW20 / Rd).